We begin with the raw amino-acid sequence, 257 residues long: Glutamate racemase (257 aa).

Residues 12-13 and 44-45 contribute to the substrate site; these read DS and YG. Cys-75 functions as the Proton donor/acceptor in the catalytic mechanism. 76-77 is a substrate binding site; it reads NT. The active-site Proton donor/acceptor is Cys-185. 186–187 contributes to the substrate binding site; sequence TH.

It belongs to the aspartate/glutamate racemases family.

It carries out the reaction L-glutamate = D-glutamate. It functions in the pathway cell wall biogenesis; peptidoglycan biosynthesis. In terms of biological role, provides the (R)-glutamate required for cell wall biosynthesis. The protein is Glutamate racemase of Clostridium botulinum (strain ATCC 19397 / Type A).